Here is a 447-residue protein sequence, read N- to C-terminus: GTPase Der (447 aa).

EngA-type G domains are found at residues 3-167 and 180-353; these read PVIA…ALPE and IRLA…KSAN. GTP is bound by residues 9–16, 56–60, 119–122, 186–193, 233–237, and 298–301; these read GRPNVGKS, DTGGF, NKAE, DTAGL, and NKWD. The region spanning 354-438 is the KH-like domain; it reads RKMPTPVLTR…PLRIEMKTSS (85 aa).

It belongs to the TRAFAC class TrmE-Era-EngA-EngB-Septin-like GTPase superfamily. EngA (Der) GTPase family. As to quaternary structure, associates with the 50S ribosomal subunit.

GTPase that plays an essential role in the late steps of ribosome biogenesis. The chain is GTPase Der from Acidovorax sp. (strain JS42).